Consider the following 196-residue polypeptide: Large ribosomal subunit protein eL15 (196 aa).

The disordered stretch occupies residues Thr-155–Lys-196. Over residues Lys-169–Gly-178 the composition is skewed to basic residues.

The protein belongs to the eukaryotic ribosomal protein eL15 family.

The polypeptide is Large ribosomal subunit protein eL15 (Methanocella arvoryzae (strain DSM 22066 / NBRC 105507 / MRE50)).